The chain runs to 408 residues: Na(+)-translocating NADH-quinone reductase subunit F (408 aa).

A helical transmembrane segment spans residues 4–24; that stretch reads IYLGVGMFTIIVLVLVAIIMF. Residues 33–127 enclose the 2Fe-2S ferredoxin-type domain; sequence GDVEILINDD…DMEIELPEEV (95 aa). Cys-70, Cys-76, Cys-79, and Cys-111 together coordinate [2Fe-2S] cluster. The FAD-binding FR-type domain maps to 130-270; that stretch reads IRKWDCTVKS…SGPFGEFFAK (141 aa).

Belongs to the NqrF family. As to quaternary structure, composed of six subunits; NqrA, NqrB, NqrC, NqrD, NqrE and NqrF. [2Fe-2S] cluster is required as a cofactor. The cofactor is FAD.

Its subcellular location is the cell inner membrane. It carries out the reaction a ubiquinone + n Na(+)(in) + NADH + H(+) = a ubiquinol + n Na(+)(out) + NAD(+). Functionally, NQR complex catalyzes the reduction of ubiquinone-1 to ubiquinol by two successive reactions, coupled with the transport of Na(+) ions from the cytoplasm to the periplasm. The first step is catalyzed by NqrF, which accepts electrons from NADH and reduces ubiquinone-1 to ubisemiquinone by a one-electron transfer pathway. The sequence is that of Na(+)-translocating NADH-quinone reductase subunit F from Idiomarina loihiensis (strain ATCC BAA-735 / DSM 15497 / L2-TR).